The chain runs to 245 residues: MKFYSVKMRASLNDRHVSGGERITTEESIQKVVSELLTRPKEFDFVNIKIEKINNIKFIEKSLDIKTINVKNHKEGNEIALKLLEEVGIDREIAKAYIDLLHTGANPDRENMRGAMIITRSGKRVEKDRYRGVRTTNVDFLHREEVKKILLEKKYTERTLDALALSTKNLNHLDIIAEYCISDQPDYTTGYVAVNNTYYRINPLKEYSNPKGGRIYFVKDDTDIEELYKYLQEESFLIKEVGSLE.

It belongs to the BioW family. Homodimer. Mg(2+) is required as a cofactor.

The enzyme catalyses heptanedioate + ATP + CoA = 6-carboxyhexanoyl-CoA + AMP + diphosphate. The protein operates within metabolic intermediate metabolism; pimeloyl-CoA biosynthesis; pimeloyl-CoA from pimelate: step 1/1. Its function is as follows. Catalyzes the transformation of pimelate into pimeloyl-CoA with concomitant hydrolysis of ATP to AMP. This chain is 6-carboxyhexanoate--CoA ligase, found in Sulfurihydrogenibium sp. (strain YO3AOP1).